The following is a 431-amino-acid chain: Serine hydroxymethyltransferase (431 aa).

(6S)-5,6,7,8-tetrahydrofolate contacts are provided by residues Leu121 and 125–127; that span reads GHL. At Lys230 the chain carries N6-(pyridoxal phosphate)lysine. A (6S)-5,6,7,8-tetrahydrofolate-binding site is contributed by 369–371; sequence SPF.

Belongs to the SHMT family. Homodimer. Pyridoxal 5'-phosphate serves as cofactor.

It is found in the cytoplasm. It carries out the reaction (6R)-5,10-methylene-5,6,7,8-tetrahydrofolate + glycine + H2O = (6S)-5,6,7,8-tetrahydrofolate + L-serine. The protein operates within one-carbon metabolism; tetrahydrofolate interconversion. It participates in amino-acid biosynthesis; glycine biosynthesis; glycine from L-serine: step 1/1. Its function is as follows. Catalyzes the reversible interconversion of serine and glycine with tetrahydrofolate (THF) serving as the one-carbon carrier. This reaction serves as the major source of one-carbon groups required for the biosynthesis of purines, thymidylate, methionine, and other important biomolecules. Also exhibits THF-independent aldolase activity toward beta-hydroxyamino acids, producing glycine and aldehydes, via a retro-aldol mechanism. This chain is Serine hydroxymethyltransferase, found in Cytophaga hutchinsonii (strain ATCC 33406 / DSM 1761 / CIP 103989 / NBRC 15051 / NCIMB 9469 / D465).